The following is a 209-amino-acid chain: Cytochrome bo(3) ubiquinol oxidase subunit 3 (209 aa).

Residues 1 to 29 (MSTAVLNKHLADAHEVGHDHDHAHDSGGN) are Cytoplasmic-facing. The chain crosses the membrane as a helical span at residues 30–50 (TVFGFWLYLMTDCVLFASVFA). The Periplasmic portion of the chain corresponds to 51–72 (TYAVLVHHTAGGPSGKDIFELP). Residues 73–93 (YVLVETAILLVSSCTYGLAML) traverse the membrane as a helical segment. The Cytoplasmic portion of the chain corresponds to 94–102 (SAHKGAKGQ). The helical transmembrane segment at 103 to 123 (AIAWLGVTFLLGAAFIGMEIN) threads the bilayer. Topologically, residues 124–143 (EFHHLIAEGFGPSRSAFLSS) are periplasmic. A helical membrane pass occupies residues 144 to 164 (FFTLVGMHGLHVSAGLLWMLV). The Cytoplasmic segment spans residues 165–186 (LMAQIWTRGLTAQNNTRMMCLS). A helical transmembrane segment spans residues 187-207 (LFWHFLDIVWICVFTVVYLMG). Residues 208-209 (AL) are Periplasmic-facing.

The protein belongs to the cytochrome c oxidase subunit 3 family. Heterooctamer of two A chains, two B chains, two C chains and two D chains.

The protein localises to the cell inner membrane. Its function is as follows. Cytochrome bo(3) ubiquinol terminal oxidase is the component of the aerobic respiratory chain of E.coli that predominates when cells are grown at high aeration. Has proton pump activity across the membrane in addition to electron transfer, pumping 2 protons/electron. This Pseudomonas aeruginosa (strain ATCC 15692 / DSM 22644 / CIP 104116 / JCM 14847 / LMG 12228 / 1C / PRS 101 / PAO1) protein is Cytochrome bo(3) ubiquinol oxidase subunit 3 (cyoC).